The primary structure comprises 159 residues: Photosystem I reaction center subunit XI (159 aa).

Helical transmembrane passes span 53–73, 84–104, and 125–145; these read LEIG…LGPL, LISG…YGIV, and FTAG…TLLE.

This sequence belongs to the PsaL family.

The protein resides in the cellular thylakoid membrane. The sequence is that of Photosystem I reaction center subunit XI from Cyanothece sp. (strain PCC 7425 / ATCC 29141).